The sequence spans 565 residues: Adenine deaminase (565 aa).

Belongs to the metallo-dependent hydrolases superfamily. Adenine deaminase family. The cofactor is Mn(2+).

The enzyme catalyses adenine + H2O + H(+) = hypoxanthine + NH4(+). This chain is Adenine deaminase, found in Lactobacillus delbrueckii subsp. bulgaricus (strain ATCC 11842 / DSM 20081 / BCRC 10696 / JCM 1002 / NBRC 13953 / NCIMB 11778 / NCTC 12712 / WDCM 00102 / Lb 14).